The following is a 337-amino-acid chain: Arylacetonitrilase (337 aa).

The CN hydrolase domain maps to valine 7–leucine 278. Residue glutamate 47 is the Proton acceptor of the active site. Residue lysine 127 is part of the active site. The Nucleophile role is filled by cysteine 162. A disordered region spans residues glutamine 311–alanine 337.

Belongs to the carbon-nitrogen hydrolase superfamily. Nitrilase family.

The catalysed reaction is a nitrile + 2 H2O = a carboxylate + NH4(+). It catalyses the reaction 4-chlorophenylacetonitrile + 2 H2O = 4-chlorophenylacetate + NH4(+). Nitrilase that hydrolyzes preferentially phenylacetonitrile, but also (R,S)-mandelonitrile, and 2-phenylpropionitrile. This chain is Arylacetonitrilase, found in Aspergillus niger (strain ATCC MYA-4892 / CBS 513.88 / FGSC A1513).